Reading from the N-terminus, the 670-residue chain is Acetolactate synthase, chloroplastic (670 aa).

Low complexity-rich tracts occupy residues 1–48 (MAAA…SSSS) and 55–77 (KSSS…TTPS). The transit peptide at 1-55 (MAAATTTTTTSSSISFSTKPSPSSSKSPLPISRFSLPFSLNPNKSSSSSRRRGIK) directs the protein to the chloroplast. The tract at residues 1–94 (MAAATTTTTT…ETFISRFAPD (94 aa)) is disordered. Residue Glu144 participates in thiamine diphosphate binding. FAD is bound at residue Ser186. Gln207 contributes to the thiamine diphosphate binding site. (R)-imazaquin is bound by residues Lys220 and Arg246. Arg246 is an FAD binding site. Lys256 is a chlorimuron-ethyl binding site. FAD is bound by residues Gly308 and 331–332 (TL). Position 340 is a cysteine sulfinic acid (-SO2H) (Cys340). FAD-binding positions include 349–352 (LGMH) and 371–375 (GVRFD). 376–377 (DR) contributes to the chlorimuron-ethyl binding site. FAD-binding positions include 395-396 (DI) and 414-415 (DV). Residues 414 to 446 (DVKLALQGMNKVLENRAEELKLDFGVWRNELNV) are a coiled coil. 487-488 (QH) serves as a coordination point for thiamine diphosphate. Residue 508-509 (GG) coordinates FAD. Thiamine diphosphate is bound by residues 511–513 (GAM), 538–540 (DGS), and 565–570 (NQHLGM). Mg(2+)-binding residues include Asp538, Asn565, and His567. Chlorimuron-ethyl is bound by residues Trp574 and Ser653.

It belongs to the TPP enzyme family. In terms of assembly, homodimer or homotetramer. The acetolactate synthase complex contains both large catalytic subunits and small regulatory subunits. Homodimer. The acetolactate synthase complex contains 4 homodimers of the large catalytic subunits, and 1 homotetramer of the small regulatory subunits. Mg(2+) is required as a cofactor. The cofactor is FAD. Thiamine diphosphate serves as cofactor.

It localises to the plastid. The protein resides in the chloroplast. The catalysed reaction is 2 pyruvate + H(+) = (2S)-2-acetolactate + CO2. It functions in the pathway amino-acid biosynthesis; L-isoleucine biosynthesis; L-isoleucine from 2-oxobutanoate: step 1/4. It participates in amino-acid biosynthesis; L-valine biosynthesis; L-valine from pyruvate: step 1/4. With respect to regulation, inhibited by asymmetric aryl disulfides, triazolopyrimidine sulfonanilide compounds, isatin derivatives, and sulfonylurea and imidazolinone herbicides. Insensitive to feed-back inhibition by branched-chain amino acids. Functionally, catalyzes the formation of acetolactate from pyruvate, the first step in valine and isoleucine biosynthesis. The polypeptide is Acetolactate synthase, chloroplastic (ALS) (Arabidopsis thaliana (Mouse-ear cress)).